The chain runs to 429 residues: Nucleotide exchange factor Sil1 (429 aa).

An N-terminal signal peptide occupies residues 1–24; sequence MSGKQVVILLGSVLILGCLQVAAA. The N-linked (GlcNAc...) asparagine glycan is linked to asparagine 29. The segment at 70 to 98 is disordered; it reads DESERGTSLQSQPDDQNARESHDDNEPLA. Residues 75–84 are compositionally biased toward polar residues; the sequence is GTSLQSQPDD. Residues 85-94 are compositionally biased toward basic and acidic residues; it reads QNARESHDDN. A coiled-coil region spans residues 104–135; sequence DIIEESIRRVKEQKKSYAELRKAYKEFQKNFR. Asparagine 150, asparagine 199, and asparagine 400 each carry an N-linked (GlcNAc...) asparagine glycan. The Prevents secretion from ER signature appears at 426-429; sequence HTEL.

The protein belongs to the SIL1 family.

It is found in the endoplasmic reticulum lumen. Required for protein translocation and folding in the endoplasmic reticulum (ER). Functions as a nucleotide exchange factor for an ER lumenal chaperone of HSP70 family. The protein is Nucleotide exchange factor Sil1 of Drosophila melanogaster (Fruit fly).